Consider the following 1186-residue polypeptide: DNA-directed RNA polymerase subunit beta (1186 aa).

Residues 1149 to 1186 (KEEDDDPSTSSDDLGFNIGARPDAAAKEDQVAEEPEFQ) are disordered.

Belongs to the RNA polymerase beta chain family. In terms of assembly, the RNAP catalytic core consists of 2 alpha, 1 beta, 1 beta' and 1 omega subunit. When a sigma factor is associated with the core the holoenzyme is formed, which can initiate transcription.

The catalysed reaction is RNA(n) + a ribonucleoside 5'-triphosphate = RNA(n+1) + diphosphate. Functionally, DNA-dependent RNA polymerase catalyzes the transcription of DNA into RNA using the four ribonucleoside triphosphates as substrates. The protein is DNA-directed RNA polymerase subunit beta of Bifidobacterium adolescentis (strain ATCC 15703 / DSM 20083 / NCTC 11814 / E194a).